The following is a 617-amino-acid chain: Probable Xaa-Pro aminopeptidase P (617 aa).

Residues D414, D425, E523, and E537 each contribute to the Mn(2+) site.

Belongs to the peptidase M24B family. Mn(2+) is required as a cofactor.

It carries out the reaction Release of any N-terminal amino acid, including proline, that is linked to proline, even from a dipeptide or tripeptide.. Catalyzes the removal of a penultimate prolyl residue from the N-termini of peptides. This chain is Probable Xaa-Pro aminopeptidase P (AMPP), found in Ajellomyces dermatitidis (strain ER-3 / ATCC MYA-2586) (Blastomyces dermatitidis).